The chain runs to 304 residues: Pyridoxal 5'-phosphate synthase subunit PdxS (304 aa).

Residue aspartate 34 coordinates D-ribose 5-phosphate. Lysine 91 acts as the Schiff-base intermediate with D-ribose 5-phosphate in catalysis. Glycine 163 contributes to the D-ribose 5-phosphate binding site. Arginine 175 is a binding site for D-glyceraldehyde 3-phosphate. D-ribose 5-phosphate is bound by residues glycine 224 and 245-246 (GS).

It belongs to the PdxS/SNZ family. As to quaternary structure, in the presence of PdxT, forms a dodecamer of heterodimers.

The catalysed reaction is aldehydo-D-ribose 5-phosphate + D-glyceraldehyde 3-phosphate + L-glutamine = pyridoxal 5'-phosphate + L-glutamate + phosphate + 3 H2O + H(+). The protein operates within cofactor biosynthesis; pyridoxal 5'-phosphate biosynthesis. In terms of biological role, catalyzes the formation of pyridoxal 5'-phosphate from ribose 5-phosphate (RBP), glyceraldehyde 3-phosphate (G3P) and ammonia. The ammonia is provided by the PdxT subunit. Can also use ribulose 5-phosphate and dihydroxyacetone phosphate as substrates, resulting from enzyme-catalyzed isomerization of RBP and G3P, respectively. The polypeptide is Pyridoxal 5'-phosphate synthase subunit PdxS (Streptomyces avermitilis (strain ATCC 31267 / DSM 46492 / JCM 5070 / NBRC 14893 / NCIMB 12804 / NRRL 8165 / MA-4680)).